The following is a 97-amino-acid chain: uncharacterized protein (97 aa).

This is an uncharacterized protein from Alcelaphine herpesvirus 1 (strain C500) (AlHV-1).